Reading from the N-terminus, the 269-residue chain is Glutamate racemase (269 aa).

Substrate is bound by residues 11-12 (DS) and 43-44 (YG). The Proton donor/acceptor role is filled by cysteine 74. 75–76 (NT) contacts substrate. The Proton donor/acceptor role is filled by cysteine 185. 186-187 (TH) provides a ligand contact to substrate.

It belongs to the aspartate/glutamate racemases family.

The catalysed reaction is L-glutamate = D-glutamate. The protein operates within cell wall biogenesis; peptidoglycan biosynthesis. Provides the (R)-glutamate required for cell wall biosynthesis. The sequence is that of Glutamate racemase from Bacillus cereus (strain G9842).